A 602-amino-acid chain; its full sequence is Elongation factor 4 (602 aa).

The tr-type G domain occupies 7–189 (SKIRNFCIIA…AVVSRIPHPQ (183 aa)). GTP-binding positions include 19–24 (DHGKST) and 136–139 (NKVD).

This sequence belongs to the TRAFAC class translation factor GTPase superfamily. Classic translation factor GTPase family. LepA subfamily.

It is found in the cell inner membrane. The enzyme catalyses GTP + H2O = GDP + phosphate + H(+). Its function is as follows. Required for accurate and efficient protein synthesis under certain stress conditions. May act as a fidelity factor of the translation reaction, by catalyzing a one-codon backward translocation of tRNAs on improperly translocated ribosomes. Back-translocation proceeds from a post-translocation (POST) complex to a pre-translocation (PRE) complex, thus giving elongation factor G a second chance to translocate the tRNAs correctly. Binds to ribosomes in a GTP-dependent manner. The protein is Elongation factor 4 of Prochlorococcus marinus subsp. pastoris (strain CCMP1986 / NIES-2087 / MED4).